Consider the following 95-residue polypeptide: Small ribosomal subunit protein bS20c (95 aa).

The segment at 76–95 (NGSAKKAKLTKRLKEKKISL) is disordered. The segment covering 80–95 (KKAKLTKRLKEKKISL) has biased composition (basic residues).

The protein belongs to the bacterial ribosomal protein bS20 family.

It is found in the plastid. The protein resides in the chloroplast. Functionally, binds directly to 16S ribosomal RNA. The protein is Small ribosomal subunit protein bS20c of Guillardia theta (Cryptophyte).